A 235-amino-acid chain; its full sequence is Urease accessory protein UreF (235 aa).

The protein belongs to the UreF family. UreD, UreF and UreG form a complex that acts as a GTP-hydrolysis-dependent molecular chaperone, activating the urease apoprotein by helping to assemble the nickel containing metallocenter of UreC. The UreE protein probably delivers the nickel.

Its subcellular location is the cytoplasm. In terms of biological role, required for maturation of urease via the functional incorporation of the urease nickel metallocenter. This chain is Urease accessory protein UreF, found in Psychrobacter cryohalolentis (strain ATCC BAA-1226 / DSM 17306 / VKM B-2378 / K5).